Reading from the N-terminus, the 362-residue chain is Phosphoserine aminotransferase (362 aa).

Arg-43 contacts L-glutamate. Pyridoxal 5'-phosphate contacts are provided by residues 77–78 (AS), Trp-103, Thr-153, Asp-173, and Gln-196. Lys-197 is modified (N6-(pyridoxal phosphate)lysine). 238-239 (NT) is a pyridoxal 5'-phosphate binding site.

This sequence belongs to the class-V pyridoxal-phosphate-dependent aminotransferase family. SerC subfamily. Homodimer. The cofactor is pyridoxal 5'-phosphate.

The protein localises to the cytoplasm. It carries out the reaction O-phospho-L-serine + 2-oxoglutarate = 3-phosphooxypyruvate + L-glutamate. The enzyme catalyses 4-(phosphooxy)-L-threonine + 2-oxoglutarate = (R)-3-hydroxy-2-oxo-4-phosphooxybutanoate + L-glutamate. It participates in amino-acid biosynthesis; L-serine biosynthesis; L-serine from 3-phospho-D-glycerate: step 2/3. Its function is as follows. Catalyzes the reversible conversion of 3-phosphohydroxypyruvate to phosphoserine and of 3-hydroxy-2-oxo-4-phosphonooxybutanoate to phosphohydroxythreonine. In Lysinibacillus sphaericus (strain C3-41), this protein is Phosphoserine aminotransferase.